Here is a 907-residue protein sequence, read N- to C-terminus: Isoleucine--tRNA ligase (907 aa).

Residues 57–67 (PFANGKAHMGS) carry the 'HIGH' region motif. Glu-549 provides a ligand contact to L-isoleucyl-5'-AMP. Residues 590 to 594 (KLSKS) carry the 'KMSKS' region motif. Lys-593 contacts ATP. Cys-867, Cys-870, Cys-889, and Cys-892 together coordinate Zn(2+).

This sequence belongs to the class-I aminoacyl-tRNA synthetase family. IleS type 1 subfamily. Monomer. Zn(2+) serves as cofactor.

The protein resides in the cytoplasm. The catalysed reaction is tRNA(Ile) + L-isoleucine + ATP = L-isoleucyl-tRNA(Ile) + AMP + diphosphate. Catalyzes the attachment of isoleucine to tRNA(Ile). As IleRS can inadvertently accommodate and process structurally similar amino acids such as valine, to avoid such errors it has two additional distinct tRNA(Ile)-dependent editing activities. One activity is designated as 'pretransfer' editing and involves the hydrolysis of activated Val-AMP. The other activity is designated 'posttransfer' editing and involves deacylation of mischarged Val-tRNA(Ile). The polypeptide is Isoleucine--tRNA ligase (Methylacidiphilum infernorum (isolate V4) (Methylokorus infernorum (strain V4))).